The following is an 871-amino-acid chain: uncharacterized protein (871 aa).

11 consecutive transmembrane segments (helical) span residues 11-31 (AFVS…GLFL), 92-112 (YLFT…PILL), 139-159 (FYAH…IIYR), 380-400 (TILT…GCIS), 422-442 (LLGI…MSLV), 475-495 (VQVF…VQVI), 520-540 (FLLQ…TLLL), 562-582 (LSAP…TIMI), 586-606 (IIAP…YFAY), 629-649 (LFQV…LFVL), and 653-673 (WGAT…HLYF). Residues Ser725, Ser726, Ser727, Ser729, Ser737, and Ser761 each carry the phosphoserine modification. Residues 727-740 (SGSDEFLETSSRTS) are compositionally biased toward polar residues. Residues 727 to 746 (SGSDEFLETSSRTSENTKEK) are disordered.

The protein belongs to the CSC1 (TC 1.A.17) family.

Its subcellular location is the golgi apparatus membrane. Its function is as follows. Acts as an osmosensitive calcium-permeable cation channel. This is an uncharacterized protein from Schizosaccharomyces pombe (strain 972 / ATCC 24843) (Fission yeast).